We begin with the raw amino-acid sequence, 248 residues long: 2,3-bisphosphoglycerate-dependent phosphoglycerate mutase (248 aa).

Substrate contacts are provided by residues 8 to 15 (RHGESTWN), 21 to 22 (TG), Arg-60, 87 to 90 (ERHY), Lys-98, 114 to 115 (RR), and 183 to 184 (GN). His-9 functions as the Tele-phosphohistidine intermediate in the catalytic mechanism. Catalysis depends on Glu-87, which acts as the Proton donor/acceptor.

This sequence belongs to the phosphoglycerate mutase family. BPG-dependent PGAM subfamily.

It carries out the reaction (2R)-2-phosphoglycerate = (2R)-3-phosphoglycerate. Its pathway is carbohydrate degradation; glycolysis; pyruvate from D-glyceraldehyde 3-phosphate: step 3/5. Its function is as follows. Catalyzes the interconversion of 2-phosphoglycerate and 3-phosphoglycerate. The chain is 2,3-bisphosphoglycerate-dependent phosphoglycerate mutase from Solibacter usitatus (strain Ellin6076).